The sequence spans 1134 residues: DENN domain-containing protein 2B (1134 aa).

Polar residues predominate over residues 1–13 (MTMTANKNSSITH). The tract at residues 1–90 (MTMTANKNSS…DPSPETSPPI (90 aa)) is disordered. A phosphoserine mark is found at Ser-30 and Ser-32. Pro residues predominate over residues 32–43 (SPPPVLYPPRSP). Thr-228 is subject to Phosphothreonine. A Phosphoserine modification is found at Ser-230. 2 disordered regions span residues 233–273 (SYPE…GIRK) and 289–571 (LKEQ…KRHS). Residues 249–259 (SLYRLEKRPGR) show a composition bias toward basic and acidic residues. The segment covering 315-348 (GTLGTLEEPTGTASVSPSSRAGGVAGVAGEAGPP) has biased composition (low complexity). A Phosphothreonine modification is found at Thr-361. The residue at position 365 (Ser-365) is a Phosphoserine. Residues 370–385 (LLPPKSSPDPAVNPVP) are compositionally biased toward pro residues. Over residues 389 to 399 (RTFEYEADKNP) the composition is skewed to basic and acidic residues. Pro residues predominate over residues 406–428 (GLPPSPTPAAPPPLPSTPAPPVT). Basic residues predominate over residues 429–443 (RRPKKDMRGHRKSQN). Residues 453-478 (SSLQSLYPSSPTENGTESQPKFGSKS) are compositionally biased toward polar residues. Thr-479 is subject to Phosphothreonine. Polar residues-rich tracts occupy residues 511 to 521 (KSQQLSENSLD) and 542 to 555 (SLKSNSQSLRSGNW). At Ser-542 the chain carries Phosphoserine. Over residues 559–570 (KSHRLPRLPKRH) the composition is skewed to basic residues. Phosphoserine is present on residues Ser-571 and Ser-619. Residues 633–658 (LSMSSLETASLRDENSESESDSDDRF) are disordered. A uDENN domain is found at 695–843 (EYFVVVSLKK…PFPAPGKTIK (149 aa)). The cDENN domain occupies 865-998 (RLEHVDFECL…LQAALEQALE (134 aa)). The dDENN domain occupies 1000–1093 (KSELISQDSD…QDRELRKCRA (94 aa)).

As to quaternary structure, interacts with ITSN1 and GRB2. Isoform 1 interacts with the SH3 domain of ABL1. Post-translationally, phosphorylated. Phosphorylation decreases ITSN1 binding.

The protein localises to the cytoplasm. It is found in the cell cortex. It localises to the cell membrane. Its subcellular location is the recycling endosome. Functionally, may be involved in cytoskeletal organization and tumorogenicity. Seems to be involved in a signaling transduction pathway leading to activation of MAPK1/ERK2. Plays a role in EGFR trafficking from recycling endosomes back to the cell membrane. Its function is as follows. Guanine nucleotide exchange factor (GEF) which may activate RAB9A and RAB9B. Promotes the exchange of GDP to GTP, converting inactive GDP-bound Rab proteins into their active GTP-bound form. In terms of biological role, may block ERK2 activation stimulated by ABL1. May alter cell morphology and cell growth. This Mus musculus (Mouse) protein is DENN domain-containing protein 2B (Dennd2b).